A 548-amino-acid polypeptide reads, in one-letter code: Membrane protein insertase YidC (548 aa).

The chain crosses the membrane as a helical span at residues Asn6–Asp26. The interval Asn28–Gly56 is disordered. A compositionally biased stretch (low complexity) spans Pro29–Thr42. A run of 4 helical transmembrane segments spans residues Phe350–Tyr370, Phe424–Ile444, Leu458–Ile478, and Pro499–Val519.

This sequence belongs to the OXA1/ALB3/YidC family. Type 1 subfamily. As to quaternary structure, interacts with the Sec translocase complex via SecD. Specifically interacts with transmembrane segments of nascent integral membrane proteins during membrane integration.

It is found in the cell inner membrane. Required for the insertion and/or proper folding and/or complex formation of integral membrane proteins into the membrane. Involved in integration of membrane proteins that insert both dependently and independently of the Sec translocase complex, as well as at least some lipoproteins. Aids folding of multispanning membrane proteins. This Salmonella newport (strain SL254) protein is Membrane protein insertase YidC.